The following is a 148-amino-acid chain: Ribose-5-P isomerase B (148 aa).

8-9 is a D-ribulose 5-phosphate binding site; the sequence is DE. The active-site Proton acceptor is C65. D-ribulose 5-phosphate contacts are provided by residues 66–70, N99, R132, and K136; that span reads GTGIG.

Belongs to the LacAB/RpiB family.

The catalysed reaction is aldehydo-D-ribose 5-phosphate = D-ribulose 5-phosphate. It participates in carbohydrate degradation; pentose phosphate pathway; D-ribose 5-phosphate from D-ribulose 5-phosphate (non-oxidative stage): step 1/1. Catalyzes the interconversion of ribulose-5-P and ribose-5-P. In Listeria innocua serovar 6a (strain ATCC BAA-680 / CLIP 11262), this protein is Ribose-5-P isomerase B.